A 518-amino-acid chain; its full sequence is Probable cytosol aminopeptidase (518 aa).

Mn(2+) contacts are provided by lysine 270 and aspartate 275. Lysine 282 is a catalytic residue. 3 residues coordinate Mn(2+): aspartate 293, aspartate 352, and glutamate 354. The active site involves arginine 356. Residues 495 to 507 (SRTTRQPGSTGET) are compositionally biased toward polar residues. Positions 495 to 518 (SRTTRQPGSTGETGSRKNRRKSKE) are disordered.

It belongs to the peptidase M17 family. The cofactor is Mn(2+).

The protein localises to the cytoplasm. The enzyme catalyses Release of an N-terminal amino acid, Xaa-|-Yaa-, in which Xaa is preferably Leu, but may be other amino acids including Pro although not Arg or Lys, and Yaa may be Pro. Amino acid amides and methyl esters are also readily hydrolyzed, but rates on arylamides are exceedingly low.. It carries out the reaction Release of an N-terminal amino acid, preferentially leucine, but not glutamic or aspartic acids.. Its function is as follows. Presumably involved in the processing and regular turnover of intracellular proteins. Catalyzes the removal of unsubstituted N-terminal amino acids from various peptides. The chain is Probable cytosol aminopeptidase from Nitrosospira multiformis (strain ATCC 25196 / NCIMB 11849 / C 71).